The primary structure comprises 101 residues: DNA-binding protein Fis (101 aa).

Residues 77–96 constitute a DNA-binding region (H-T-H motif); it reads QTRAANMLGINRGTLRKKLK.

This sequence belongs to the transcriptional regulatory Fis family. Homodimer.

Its function is as follows. Activates ribosomal RNA transcription. Plays a direct role in upstream activation of rRNA promoters. In Shewanella amazonensis (strain ATCC BAA-1098 / SB2B), this protein is DNA-binding protein Fis.